The chain runs to 473 residues: Photosystem II CP43 reaction center protein (473 aa).

Positions 1-14 are excised as a propeptide; sequence MKTLYSLRRSYPVE. N-acetylthreonine is present on T15. T15 is subject to Phosphothreonine. The next 5 helical transmembrane spans lie at 69-93, 134-155, 178-200, 255-275, and 291-312; these read LFEVAHFVPEKPMYEQGLILLPHLA, LIGPETLEESFPFFGYVWKDRN, KALYFGGVYDTWAPGGGDVRKIT, KPFAWARRAFVWSGEAYLSYS, and WFNNTVYPSEFYGPTGPEASQA. E367 provides a ligand contact to [CaMn4O5] cluster. Residues 447–471 form a helical membrane-spanning segment; that stretch reads RARAAAAGFEKGIDRDFEPVLSMTP.

Belongs to the PsbB/PsbC family. PsbC subfamily. As to quaternary structure, PSII is composed of 1 copy each of membrane proteins PsbA, PsbB, PsbC, PsbD, PsbE, PsbF, PsbH, PsbI, PsbJ, PsbK, PsbL, PsbM, PsbT, PsbX, PsbY, PsbZ, Psb30/Ycf12, at least 3 peripheral proteins of the oxygen-evolving complex and a large number of cofactors. It forms dimeric complexes. The cofactor is Binds multiple chlorophylls and provides some of the ligands for the Ca-4Mn-5O cluster of the oxygen-evolving complex. It may also provide a ligand for a Cl- that is required for oxygen evolution. PSII binds additional chlorophylls, carotenoids and specific lipids..

The protein resides in the plastid. It is found in the chloroplast thylakoid membrane. Functionally, one of the components of the core complex of photosystem II (PSII). It binds chlorophyll and helps catalyze the primary light-induced photochemical processes of PSII. PSII is a light-driven water:plastoquinone oxidoreductase, using light energy to abstract electrons from H(2)O, generating O(2) and a proton gradient subsequently used for ATP formation. This chain is Photosystem II CP43 reaction center protein, found in Pinus koraiensis (Korean pine).